The primary structure comprises 792 residues: Kinesin-like protein KIF3C (792 aa).

Residues 10–363 (ALKVVARCRP…LRFANRAKNI (354 aa)) enclose the Kinesin motor domain. 97-104 (GQTGTGKT) contributes to the ATP binding site. Disordered stretches follow at residues 249–287 (GSER…RPKE), 397–418 (MLGK…APAG), and 749–792 (RPST…LDHE). The span at 257 to 268 (GPNTTGGTATQP) shows a compositional bias: low complexity. Positions 269–282 (TGGGGGGGGGGGGG) are enriched in gly residues. Positions 374–627 (KDTLLREFQE…QNEQTRELKL (254 aa)) form a coiled coil. A compositionally biased stretch (basic residues) spans 397 to 412 (MLGKRLRRKSSRRKKA). The interval 628–792 (KYLIIENFIP…LRPTTVLDHE (165 aa)) is globular. Residues 773–792 (AHASLAASAALRPTTVLDHE) show a composition bias toward low complexity.

The protein belongs to the TRAFAC class myosin-kinesin ATPase superfamily. Kinesin family. Kinesin II subfamily. As to quaternary structure, heterodimer of KIF3A and KIF3C.

It localises to the cytoplasm. The protein localises to the cytoskeleton. Functionally, microtubule-based anterograde translocator for membranous organelles. This Bos taurus (Bovine) protein is Kinesin-like protein KIF3C (KIF3C).